The sequence spans 142 residues: Large ribosomal subunit protein uL11 (142 aa).

The residue at position 2 (alanine 2) is a N,N,N-trimethylalanine. N6,N6,N6-trimethyllysine is present on residues lysine 4 and lysine 40.

It belongs to the universal ribosomal protein uL11 family. In terms of assembly, part of the ribosomal stalk of the 50S ribosomal subunit. Interacts with L10 and the large rRNA to form the base of the stalk. L10 forms an elongated spine to which L12 dimers bind in a sequential fashion forming a multimeric L10(L12)X complex. Post-translationally, one or more lysine residues are methylated.

Functionally, forms part of the ribosomal stalk which helps the ribosome interact with GTP-bound translation factors. The chain is Large ribosomal subunit protein uL11 from Shigella flexneri.